A 96-amino-acid chain; its full sequence is UPF0251 protein Ssed_3913 (96 aa).

The protein belongs to the UPF0251 family.

The chain is UPF0251 protein Ssed_3913 from Shewanella sediminis (strain HAW-EB3).